The chain runs to 311 residues: MLSVVPRPVVVRAPSKVNLHLAVGDLRDDGYHELNTVFQALSLSDTVSVAPAETLSVTVRGEDARVVPTDSSNLVWQAAEMLAAESGRRPDVEIAIDKGIPVAGGMAGGSADAAATLVGLNALWQLDLSREELDGFAAKLGSDVPFSLHGGTAVGTGRGERLLPVLSRSTFHWVLALAKVGLSTPTVFRELDRLRADGNPPRLGGPEDLMHALTTGDAATLAPLLGNDLQSAALSLNPGLRRTLRAGVAAGALAGIVSGSGPTCAFLCAEADAAVRVSAELAGAGVCRTVRVASGPVPGARIINDAAEGSH.

Lysine 16 is a catalytic residue. Position 101–111 (101–111) interacts with ATP; that stretch reads PVAGGMAGGSA. Aspartate 143 is a catalytic residue.

This sequence belongs to the GHMP kinase family. IspE subfamily.

It catalyses the reaction 4-CDP-2-C-methyl-D-erythritol + ATP = 4-CDP-2-C-methyl-D-erythritol 2-phosphate + ADP + H(+). Its pathway is isoprenoid biosynthesis; isopentenyl diphosphate biosynthesis via DXP pathway; isopentenyl diphosphate from 1-deoxy-D-xylulose 5-phosphate: step 3/6. Catalyzes the phosphorylation of the position 2 hydroxy group of 4-diphosphocytidyl-2C-methyl-D-erythritol. The protein is 4-diphosphocytidyl-2-C-methyl-D-erythritol kinase of Rhodococcus jostii (strain RHA1).